The following is a 715-amino-acid chain: MTTTSAFMLNVRLDNVAVVAIDVPGEKVNTLKAEFAAQVRAILKQIRENKALQGVVFISAKADNFIAGADINMIGHCQNAQEAETLARQGQQLMAEIQALPVPVIAAIHGACLGGGLEMALACHRRICTDDVKTVLGLPEVQLGLLPGSGGTQRLPRLVGVSTALDMILTGKQLRARQALKAGLVDDVVPQTILLEAAVELAKKERLAQRTLPVRERILAGPLGRALLFRLVRKKTAQKTQGNYPATERIIDVIETGLAQGSSSGYDAEARAFGELAMTPQSQALRAVFFASTEVKKDPGSDAPPGPLNSVGILGGGLMGGGIAWVTACKGGLPVRIKDINTQGINHALKYSWDLLETKVRRRHIKANERDKQLALISGSTDYRGFSHRDLVIEAVFEDLPLKQQMVAEVEQNCAAHTIFASNTSSLPIGDIAANAARPEQVIGLHFFSPVEKMPLVEVIPHASTSAQTIATTVKLAKKQGKTPIVVSDKAGFYVNRILAPYINKAIRMLTEGERVEHIDAALVKFGFPVGPIQLLDEVGIDTGTKIIPVLEAAYGERFSAPANVVASILNDDRKGRKNGRGFYLYGEKGRKSKKQVDPAIYKLIGVQGQSRLSAQQVAERCVMLMLNEAARCFDEKVIRSARDGDIGAVFGIGFPPFLGGPFRYMDALGPGEMVATLQRLAALYGPRYAPCEQLVRMAERREHFWTNGETDQGN.

Residues 1-190 (MTTTSAFMLN…KAGLVDDVVP (190 aa)) form an enoyl-CoA hydratase region. The segment at 306–715 (GPLNSVGILG…WTNGETDQGN (410 aa)) is 3-hydroxyacyl-CoA dehydrogenase.

This sequence in the N-terminal section; belongs to the enoyl-CoA hydratase/isomerase family. The protein in the central section; belongs to the 3-hydroxyacyl-CoA dehydrogenase family. In terms of assembly, heterotetramer of two alpha chains (FadJ) and two beta chains (FadI).

The protein resides in the cytoplasm. It carries out the reaction a (3S)-3-hydroxyacyl-CoA = a (2E)-enoyl-CoA + H2O. The catalysed reaction is a 4-saturated-(3S)-3-hydroxyacyl-CoA = a (3E)-enoyl-CoA + H2O. The enzyme catalyses a (3S)-3-hydroxyacyl-CoA + NAD(+) = a 3-oxoacyl-CoA + NADH + H(+). It catalyses the reaction (3S)-3-hydroxybutanoyl-CoA = (3R)-3-hydroxybutanoyl-CoA. It participates in lipid metabolism; fatty acid beta-oxidation. Its function is as follows. Catalyzes the formation of a hydroxyacyl-CoA by addition of water on enoyl-CoA. Also exhibits 3-hydroxyacyl-CoA epimerase and 3-hydroxyacyl-CoA dehydrogenase activities. The chain is Fatty acid oxidation complex subunit alpha from Salmonella gallinarum (strain 287/91 / NCTC 13346).